The sequence spans 455 residues: Ribulose bisphosphate carboxylase large chain (455 aa).

Lys-5 is modified (N6,N6,N6-trimethyllysine). Substrate contacts are provided by Asn-114 and Thr-164. Lys-166 (proton acceptor) is an active-site residue. Substrate is bound at residue Lys-168. Residues Lys-192, Asp-194, and Glu-195 each coordinate Mg(2+). Lys-192 carries the N6-carboxylysine modification. The active-site Proton acceptor is His-285. 3 residues coordinate substrate: Arg-286, His-318, and Ser-370.

The protein belongs to the RuBisCO large chain family. Type I subfamily. In terms of assembly, heterohexadecamer of 8 large chains and 8 small chains; disulfide-linked. The disulfide link is formed within the large subunit homodimers. It depends on Mg(2+) as a cofactor. In terms of processing, the disulfide bond which can form in the large chain dimeric partners within the hexadecamer appears to be associated with oxidative stress and protein turnover.

Its subcellular location is the plastid. The protein localises to the chloroplast. It catalyses the reaction 2 (2R)-3-phosphoglycerate + 2 H(+) = D-ribulose 1,5-bisphosphate + CO2 + H2O. The catalysed reaction is D-ribulose 1,5-bisphosphate + O2 = 2-phosphoglycolate + (2R)-3-phosphoglycerate + 2 H(+). Its function is as follows. RuBisCO catalyzes two reactions: the carboxylation of D-ribulose 1,5-bisphosphate, the primary event in carbon dioxide fixation, as well as the oxidative fragmentation of the pentose substrate in the photorespiration process. Both reactions occur simultaneously and in competition at the same active site. This Lupinus luteus (European yellow lupine) protein is Ribulose bisphosphate carboxylase large chain.